The chain runs to 84 residues: MSILSFLLGEKKKSASVAKERLQLIIAHERVGGRPPADYLPALQKELVAVISKYVHISNDDIRVSLERQDDLEVLEVKIEIPQA.

Belongs to the MinE family.

In terms of biological role, prevents the cell division inhibition by proteins MinC and MinD at internal division sites while permitting inhibition at polar sites. This ensures cell division at the proper site by restricting the formation of a division septum at the midpoint of the long axis of the cell. The protein is Cell division topological specificity factor of Burkholderia cenocepacia (strain ATCC BAA-245 / DSM 16553 / LMG 16656 / NCTC 13227 / J2315 / CF5610) (Burkholderia cepacia (strain J2315)).